Consider the following 114-residue polypeptide: MLNYFFKKKSKLLKSTNFQYVFSNPCNKNTFHINILGRSNLLGHPRLGLSISRKNIKHAYRRNKIKRLIRETFRLLQHRLISMDFVVIAKKNIVYLNNKKIVNILEYIWSNYQR.

It belongs to the RnpA family. In terms of assembly, consists of a catalytic RNA component (M1 or rnpB) and a protein subunit.

It carries out the reaction Endonucleolytic cleavage of RNA, removing 5'-extranucleotides from tRNA precursor.. Its function is as follows. RNaseP catalyzes the removal of the 5'-leader sequence from pre-tRNA to produce the mature 5'-terminus. It can also cleave other RNA substrates such as 4.5S RNA. The protein component plays an auxiliary but essential role in vivo by binding to the 5'-leader sequence and broadening the substrate specificity of the ribozyme. This chain is Ribonuclease P protein component, found in Buchnera aphidicola subsp. Schizaphis graminum (strain Sg).